A 343-amino-acid chain; its full sequence is Ribosomal RNA small subunit methyltransferase C (343 aa).

Belongs to the methyltransferase superfamily. RsmC family. Monomer.

It localises to the cytoplasm. It carries out the reaction guanosine(1207) in 16S rRNA + S-adenosyl-L-methionine = N(2)-methylguanosine(1207) in 16S rRNA + S-adenosyl-L-homocysteine + H(+). Specifically methylates the guanine in position 1207 of 16S rRNA in the 30S particle. In Shewanella sediminis (strain HAW-EB3), this protein is Ribosomal RNA small subunit methyltransferase C.